The primary structure comprises 200 residues: UPF0301 protein BR0480/BS1330_I0481 (200 aa).

This sequence belongs to the UPF0301 (AlgH) family.

This is UPF0301 protein BR0480/BS1330_I0481 from Brucella suis biovar 1 (strain 1330).